The following is a 257-amino-acid chain: Flagellar brake protein YcgR 1 (257 aa).

Polar residues predominate over residues 1–18; sequence MDTTQSNGQTDTQGQLHA. Residues 1–30 are disordered; the sequence is MDTTQSNGQTDTQGQLHAQTAEGGNDFGRR. Residues 133-246 enclose the PilZ domain; it reads QRREYFRVDA…AENTLQRLIT (114 aa).

This sequence belongs to the YcgR family. Monomer. Interacts with the flagellar basal bodies.

It localises to the bacterial flagellum basal body. In terms of biological role, acts as a flagellar brake, regulating swimming and swarming in a bis-(3'-5') cyclic diguanylic acid (c-di-GMP)-dependent manner. Binds 1 c-di-GMP dimer per subunit. Increasing levels of c-di-GMP lead to decreased motility. In Paraburkholderia phytofirmans (strain DSM 17436 / LMG 22146 / PsJN) (Burkholderia phytofirmans), this protein is Flagellar brake protein YcgR 1.